The following is a 353-amino-acid chain: Putative transcription factor MTF1 (353 aa).

2 stretches are compositionally biased toward polar residues: residues 11-26 (VTRSNQQTAANTTSPA) and 36-58 (EPSNVSDLTSEPVESTQIKQQGN). Disordered stretches follow at residues 11–96 (VTRS…ALPC) and 129–174 (FTTT…TTNP). Composition is skewed to low complexity over residues 59–95 (TEASQDIQQEQQQQQTHIHPQQPALSAQQTQQQPALP) and 133–145 (NSSPNPSSPSPSS). The span at 148–164 (SHTRKNSKYTVRHHRTR) shows a compositional bias: basic residues. The span at 165–174 (QSSFNGTTNP) shows a compositional bias: polar residues.

The protein localises to the nucleus. In terms of biological role, may be involved in transcriptional activation. In Mucor circinelloides f. lusitanicus (Mucor racemosus var. lusitanicus), this protein is Putative transcription factor MTF1 (MTF1).